The sequence spans 64 residues: Large ribosomal subunit protein bL28 (64 aa).

The interval 1–23 (MARKDQISHRGPLSGNNRSHALN) is disordered.

Belongs to the bacterial ribosomal protein bL28 family.

The protein is Large ribosomal subunit protein bL28 of Mesomycoplasma hyopneumoniae (strain J / ATCC 25934 / NCTC 10110) (Mycoplasma hyopneumoniae).